Here is a 461-residue protein sequence, read N- to C-terminus: A-type ATP synthase subunit B (461 aa).

This sequence belongs to the ATPase alpha/beta chains family. Has multiple subunits with at least A(3), B(3), C, D, E, F, H, I and proteolipid K(x).

It is found in the cell membrane. In terms of biological role, component of the A-type ATP synthase that produces ATP from ADP in the presence of a proton gradient across the membrane. The B chain is a regulatory subunit. The sequence is that of A-type ATP synthase subunit B from Methanoculleus marisnigri (strain ATCC 35101 / DSM 1498 / JR1).